Here is a 211-residue protein sequence, read N- to C-terminus: Large ribosomal subunit protein bL17c (211 aa).

The N-terminal 95 residues, 1–95 (MAIPMSMAMA…IVDGGGRIYA (95 aa)), are a transit peptide targeting the chloroplast.

It belongs to the bacterial ribosomal protein bL17 family. In terms of assembly, part of the 50S ribosomal subunit.

It localises to the plastid. It is found in the chloroplast. Functionally, this protein binds directly to 23S ribosomal RNA. In Arabidopsis thaliana (Mouse-ear cress), this protein is Large ribosomal subunit protein bL17c (RPL17).